We begin with the raw amino-acid sequence, 746 residues long: Teichoic acid poly(glycerol phosphate) polymerase (746 aa).

CDP-glycerol-binding positions include 473 to 477 (WHGTP), R540, 573 to 574 (PT), 610 to 612 (RMH), 652 to 653 (SS), and D657.

Belongs to the CDP-glycerol glycerophosphotransferase family.

The protein localises to the cell membrane. It catalyses the reaction 4-O-[(2R)-glycerylphospho]-N-acetyl-beta-D-mannosaminyl-(1-&gt;4)-N-acetyl-alpha-D-glucosaminyl di-trans,octa-cis-undecaprenyl diphosphate + n CDP-glycerol = 4-O-{[(2R)-1-glycerylphospho](n)-(2R)-1-glycerylphospho}-N-acetyl-beta-D-mannosaminyl-(1-&gt;4)-N-acetyl-alpha-D-glucosaminyl undecaprenyl diphosphate + n CMP + n H(+). The protein operates within cell wall biogenesis; poly(glycerol phosphate) teichoic acid biosynthesis. Responsible for the polymerization of the main chain of the major teichoic acid by sequential transfer of glycerol phosphate units from CDP-glycerol to the disaccharide linkage unit. Synthesizes polymers of approximately 35 glycerol phosphate units in length. The chain is Teichoic acid poly(glycerol phosphate) polymerase (tagF) from Bacillus subtilis (strain 168).